The chain runs to 658 residues: Cysteine-rich receptor-like protein kinase 36 (658 aa).

The N-terminal stretch at 1–26 (MERSNLFHIPCFLLLFLLFNINGVHT) is a signal peptide. Gnk2-homologous domains are found at residues 27–128 (TFVC…NIHR) and 139–246 (NVPH…DYRF). Topologically, residues 27 to 281 (TFVCGDEDFS…KKGRMFQPWS (255 aa)) are extracellular. N-linked (GlcNAc...) asparagine glycans are attached at residues asparagine 38, asparagine 64, asparagine 116, asparagine 150, and asparagine 163. A helical membrane pass occupies residues 282 to 302 (VVVVVFPTGINLAVFVAFVLA). At 303–658 (YRRMRRRIYT…EVSITVLYPR (356 aa)) the chain is on the cytoplasmic side. The region spanning 340 to 612 (FSLENKLGQG…ITWLARDGTF (273 aa)) is the Protein kinase domain. Residues 346 to 354 (LGQGGFGSV) and lysine 368 contribute to the ATP site. Tyrosine 413 is modified (phosphotyrosine). Aspartate 465 functions as the Proton acceptor in the catalytic mechanism. Serine 469 is subject to Phosphoserine. At threonine 505 the chain carries Phosphothreonine. Phosphotyrosine is present on tyrosine 513.

This sequence belongs to the protein kinase superfamily. Ser/Thr protein kinase family. CRK subfamily. In terms of assembly, interacts with CRK45. In terms of processing, autophosphorylated.

It localises to the cell membrane. The catalysed reaction is L-seryl-[protein] + ATP = O-phospho-L-seryl-[protein] + ADP + H(+). It catalyses the reaction L-threonyl-[protein] + ATP = O-phospho-L-threonyl-[protein] + ADP + H(+). Functionally, forms a complex with CRK45 that may negatively control abscisic acid (ABA) and osmotic stress signal transduction. Can phosphorylate CRK45 in vitro. The polypeptide is Cysteine-rich receptor-like protein kinase 36 (Arabidopsis thaliana (Mouse-ear cress)).